Reading from the N-terminus, the 330-residue chain is Fructose-1,6-bisphosphatase class 1 (330 aa).

E78, D97, L99, and D100 together coordinate Mg(2+). Residues 100–103 (DGSS) and N188 contribute to the substrate site. E260 contributes to the Mg(2+) binding site.

The protein belongs to the FBPase class 1 family. As to quaternary structure, homotetramer. Mg(2+) is required as a cofactor.

The protein resides in the cytoplasm. It carries out the reaction beta-D-fructose 1,6-bisphosphate + H2O = beta-D-fructose 6-phosphate + phosphate. It functions in the pathway carbohydrate biosynthesis; gluconeogenesis. This is Fructose-1,6-bisphosphatase class 1 from Paracoccus denitrificans (strain Pd 1222).